A 348-amino-acid chain; its full sequence is Holliday junction branch migration complex subunit RuvB (348 aa).

A large ATPase domain (RuvB-L) region spans residues 4–184 (ADRLIAASGR…FGIVQRLEFY (181 aa)). ATP-binding positions include I23, R24, G65, K68, T69, T70, 131–133 (EDF), R174, Y184, and R221. T69 lines the Mg(2+) pocket. A small ATPAse domain (RuvB-S) region spans residues 185 to 255 (SDKDLATIVS…VADMALNLLD (71 aa)). Positions 258–348 (ERGFDHSDRR…GGDFSEPGDE (91 aa)) are head domain (RuvB-H). Residues R294, R313, and R318 each contribute to the DNA site.

This sequence belongs to the RuvB family. As to quaternary structure, homohexamer. Forms an RuvA(8)-RuvB(12)-Holliday junction (HJ) complex. HJ DNA is sandwiched between 2 RuvA tetramers; dsDNA enters through RuvA and exits via RuvB. An RuvB hexamer assembles on each DNA strand where it exits the tetramer. Each RuvB hexamer is contacted by two RuvA subunits (via domain III) on 2 adjacent RuvB subunits; this complex drives branch migration. In the full resolvosome a probable DNA-RuvA(4)-RuvB(12)-RuvC(2) complex forms which resolves the HJ.

It localises to the cytoplasm. It carries out the reaction ATP + H2O = ADP + phosphate + H(+). Functionally, the RuvA-RuvB-RuvC complex processes Holliday junction (HJ) DNA during genetic recombination and DNA repair, while the RuvA-RuvB complex plays an important role in the rescue of blocked DNA replication forks via replication fork reversal (RFR). RuvA specifically binds to HJ cruciform DNA, conferring on it an open structure. The RuvB hexamer acts as an ATP-dependent pump, pulling dsDNA into and through the RuvAB complex. RuvB forms 2 homohexamers on either side of HJ DNA bound by 1 or 2 RuvA tetramers; 4 subunits per hexamer contact DNA at a time. Coordinated motions by a converter formed by DNA-disengaged RuvB subunits stimulates ATP hydrolysis and nucleotide exchange. Immobilization of the converter enables RuvB to convert the ATP-contained energy into a lever motion, pulling 2 nucleotides of DNA out of the RuvA tetramer per ATP hydrolyzed, thus driving DNA branch migration. The RuvB motors rotate together with the DNA substrate, which together with the progressing nucleotide cycle form the mechanistic basis for DNA recombination by continuous HJ branch migration. Branch migration allows RuvC to scan DNA until it finds its consensus sequence, where it cleaves and resolves cruciform DNA. In Pseudomonas putida (strain GB-1), this protein is Holliday junction branch migration complex subunit RuvB.